We begin with the raw amino-acid sequence, 86 residues long: Large ribosomal subunit protein bL35m (86 aa).

Residues 1–18 constitute a mitochondrion transit peptide; that stretch reads MLVVFQRVVRATVLVGRK. Residues 45–69 are disordered; it reads RKHAGAQHLNRDTSSSTRARQRQWE.

Belongs to the bacterial ribosomal protein bL35 family. Component of the mitochondrial large ribosomal subunit (mt-LSU). Mature yeast 74S mitochondrial ribosomes consist of a small (37S) and a large (54S) subunit. The 37S small subunit contains a 15S ribosomal RNA (15S mt-rRNA) and at least 32 different proteins. The 54S large subunit contains a 21S rRNA (21S mt-rRNA) and at least 45 different proteins.

It is found in the mitochondrion. Functionally, component of the mitochondrial ribosome (mitoribosome), a dedicated translation machinery responsible for the synthesis of mitochondrial genome-encoded proteins, including at least some of the essential transmembrane subunits of the mitochondrial respiratory chain. The mitoribosomes are attached to the mitochondrial inner membrane and translation products are cotranslationally integrated into the membrane. The sequence is that of Large ribosomal subunit protein bL35m (new15) from Schizosaccharomyces pombe (strain 972 / ATCC 24843) (Fission yeast).